A 282-amino-acid polypeptide reads, in one-letter code: MDCSICTTMPSILRPPRNTICGSCYEGARTTIALLKKLEGSKEDRHDKSNHNSTINNGSSISSSPLFSCEPQPLEKVIKWMKNMKETEEEQKKRIVFLSSFVSGFKEQLHADILLKPGDDGPPIPAHRALLASKSEIFKNILDSDGCKTAPEYAITLQELNSEQLQALLEFLYTGTLASDKLEKNVYALFIAADKYMIHYLQELCEQYMLSSLDISSVLNVLDVSDLGSSKTLKEACVGFVVRNMDDVVFSDKYEPFSQKNQHLCVEITRAFLMETRSKRRD.

The segment covering 40-50 (GSKEDRHDKSN) has biased composition (basic and acidic residues). Residues 40–66 (GSKEDRHDKSNHNSTINNGSSISSSPL) form a disordered region. Over residues 51 to 64 (HNSTINNGSSISSS) the composition is skewed to low complexity. The region spanning 111 to 181 (ADILLKPGDD…LYTGTLASDK (71 aa)) is the BTB domain.

It functions in the pathway protein modification; protein ubiquitination. May act as a substrate-specific adapter of an E3 ubiquitin-protein ligase complex (CUL3-RBX1-BTB) which mediates the ubiquitination and subsequent proteasomal degradation of target proteins. This Arabidopsis thaliana (Mouse-ear cress) protein is BTB/POZ domain-containing protein At3g56230.